Here is a 217-residue protein sequence, read N- to C-terminus: Large ribosomal subunit protein uL3 (217 aa).

The disordered stretch occupies residues 129-161 (SRGPMSHGSKNHRAPGSTGAGTTPGRIYPGKRM). Low complexity predominate over residues 142–153 (APGSTGAGTTPG).

It belongs to the universal ribosomal protein uL3 family. In terms of assembly, part of the 50S ribosomal subunit. Forms a cluster with proteins L14 and L19.

In terms of biological role, one of the primary rRNA binding proteins, it binds directly near the 3'-end of the 23S rRNA, where it nucleates assembly of the 50S subunit. This Prochlorococcus marinus (strain MIT 9515) protein is Large ribosomal subunit protein uL3.